Reading from the N-terminus, the 453-residue chain is uncharacterized protein (453 aa).

Residues 276–437 form the YrdC-like domain; it reads IAQTKQIKAL…TKQIVRGSST (162 aa).

This is an uncharacterized protein from Mycoplasma pneumoniae (strain ATCC 29342 / M129 / Subtype 1) (Mycoplasmoides pneumoniae).